A 471-amino-acid chain; its full sequence is Siroheme synthase 1 (471 aa).

A precorrin-2 dehydrogenase /sirohydrochlorin ferrochelatase region spans residues methionine 1–leucine 203. NAD(+)-binding positions include glutamate 22 to isoleucine 23 and glutamate 43 to threonine 44. A Phosphoserine modification is found at serine 128. The uroporphyrinogen-III C-methyltransferase stretch occupies residues glycine 215–alanine 471. S-adenosyl-L-methionine is bound at residue proline 224. Catalysis depends on aspartate 247, which acts as the Proton acceptor. Lysine 269 (proton donor) is an active-site residue. S-adenosyl-L-methionine-binding positions include glycine 300–aspartate 302, isoleucine 305, threonine 330–alanine 331, methionine 382, and glycine 411.

In the N-terminal section; belongs to the precorrin-2 dehydrogenase / sirohydrochlorin ferrochelatase family. This sequence in the C-terminal section; belongs to the precorrin methyltransferase family.

The catalysed reaction is uroporphyrinogen III + 2 S-adenosyl-L-methionine = precorrin-2 + 2 S-adenosyl-L-homocysteine + H(+). It carries out the reaction precorrin-2 + NAD(+) = sirohydrochlorin + NADH + 2 H(+). It catalyses the reaction siroheme + 2 H(+) = sirohydrochlorin + Fe(2+). Its pathway is cofactor biosynthesis; adenosylcobalamin biosynthesis; precorrin-2 from uroporphyrinogen III: step 1/1. The protein operates within cofactor biosynthesis; adenosylcobalamin biosynthesis; sirohydrochlorin from precorrin-2: step 1/1. It functions in the pathway porphyrin-containing compound metabolism; siroheme biosynthesis; precorrin-2 from uroporphyrinogen III: step 1/1. It participates in porphyrin-containing compound metabolism; siroheme biosynthesis; siroheme from sirohydrochlorin: step 1/1. Its pathway is porphyrin-containing compound metabolism; siroheme biosynthesis; sirohydrochlorin from precorrin-2: step 1/1. Its function is as follows. Multifunctional enzyme that catalyzes the SAM-dependent methylations of uroporphyrinogen III at position C-2 and C-7 to form precorrin-2 via precorrin-1. Then it catalyzes the NAD-dependent ring dehydrogenation of precorrin-2 to yield sirohydrochlorin. Finally, it catalyzes the ferrochelation of sirohydrochlorin to yield siroheme. In Klebsiella pneumoniae subsp. pneumoniae (strain ATCC 700721 / MGH 78578), this protein is Siroheme synthase 1.